We begin with the raw amino-acid sequence, 62 residues long: Sauvatide (62 aa).

Positions 1 to 24 are cleaved as a signal peptide; that stretch reads MDILKKSLFLILFLGLVSISFCDG. Positions 25–46 are excised as a propeptide; sequence EKRQDDDEANESEEKKEIHEVE. Residue lysine 58 is modified to Lysine amide.

In terms of tissue distribution, expressed by the skin glands.

It is found in the secreted. Its function is as follows. Induces contraction of smooth muscle in isolated rat urinary bladder with an EC(50) value of 2.2nM. This Phyllomedusa sauvagei (Sauvage's leaf frog) protein is Sauvatide.